The primary structure comprises 328 residues: Protein chibby homolog 2 (328 aa).

The segment at 180-231 (NKGASSVQKDTENTTAAGEGSLGPTCQEEHDAKEESTTPTQNDTKIAPSTED) is disordered. A compositionally biased stretch (polar residues) spans 182–195 (GASSVQKDTENTTA). The span at 206–215 (QEEHDAKEES) shows a compositional bias: basic and acidic residues. Residues 259–307 (RESLHALQDESKFFQEEYKKLKLQLNNVKNTVSDITTQMEMLEKELIAI) adopt a coiled-coil conformation.

Belongs to the chibby family. SPERT subfamily.

This chain is Protein chibby homolog 2 (CBY2), found in Gallus gallus (Chicken).